A 194-amino-acid chain; its full sequence is Peptidyl-tRNA hydrolase (194 aa).

Tyr-16 contributes to the tRNA binding site. Catalysis depends on His-21, which acts as the Proton acceptor. TRNA is bound by residues Phe-67, Asn-69, and Asn-115.

It belongs to the PTH family. As to quaternary structure, monomer.

Its subcellular location is the cytoplasm. It carries out the reaction an N-acyl-L-alpha-aminoacyl-tRNA + H2O = an N-acyl-L-amino acid + a tRNA + H(+). Functionally, hydrolyzes ribosome-free peptidyl-tRNAs (with 1 or more amino acids incorporated), which drop off the ribosome during protein synthesis, or as a result of ribosome stalling. Catalyzes the release of premature peptidyl moieties from peptidyl-tRNA molecules trapped in stalled 50S ribosomal subunits, and thus maintains levels of free tRNAs and 50S ribosomes. This Salmonella paratyphi B (strain ATCC BAA-1250 / SPB7) protein is Peptidyl-tRNA hydrolase.